The chain runs to 149 residues: Glucosamine 6-phosphate N-acetyltransferase (149 aa).

Residues 5-149 form the N-acetyltransferase domain; that stretch reads FKIRKLEISD…KSIQMSKYFD (145 aa). Substrate-binding positions include Thr-27, 75-78, and 87-89; these read KFLR and EDV. 97–102 serves as a coordination point for acetyl-CoA; it reads GKQLGK. Substrate is bound at residue 118-119; it reads YK. 132–134 is a binding site for acetyl-CoA; it reads YEK.

It belongs to the acetyltransferase family. GNA1 subfamily. As to quaternary structure, homodimer. As to expression, expressed in roots, leaves, stems, cauline leaves, flowers and siliques.

It localises to the endoplasmic reticulum membrane. It catalyses the reaction D-glucosamine 6-phosphate + acetyl-CoA = N-acetyl-D-glucosamine 6-phosphate + CoA + H(+). It participates in nucleotide-sugar biosynthesis; UDP-N-acetyl-alpha-D-glucosamine biosynthesis; N-acetyl-alpha-D-glucosamine 1-phosphate from alpha-D-glucosamine 6-phosphate (route I): step 1/2. Acetyltransferase involved in UDP-N-acetylglucosamine (UDP-GlcNAc) biosynthesis. UDP-GlcNAc is an essential metabolite that serves as an initial sugar donor for N-glycan synthesis and thus plays an important role in protein and lipid glycosylation. The chain is Glucosamine 6-phosphate N-acetyltransferase (GNA1) from Arabidopsis thaliana (Mouse-ear cress).